The chain runs to 430 residues: Adenylosuccinate synthetase (430 aa).

GTP contacts are provided by residues 12–18 (GDEGKGK) and 40–42 (GHT). Asp13 acts as the Proton acceptor in catalysis. Mg(2+) is bound by residues Asp13 and Gly40. IMP contacts are provided by residues 13–16 (DEGK), 38–41 (NAGH), Thr128, Arg142, Gln223, Thr238, and Arg302. The active-site Proton donor is the His41. 298-304 (TTTGRPR) is a binding site for substrate. GTP contacts are provided by residues Arg304, 330–332 (SID), and 412–414 (SVG).

Belongs to the adenylosuccinate synthetase family. As to quaternary structure, homodimer. Mg(2+) serves as cofactor.

The protein localises to the cytoplasm. It catalyses the reaction IMP + L-aspartate + GTP = N(6)-(1,2-dicarboxyethyl)-AMP + GDP + phosphate + 2 H(+). It participates in purine metabolism; AMP biosynthesis via de novo pathway; AMP from IMP: step 1/2. In terms of biological role, plays an important role in the de novo pathway of purine nucleotide biosynthesis. Catalyzes the first committed step in the biosynthesis of AMP from IMP. The chain is Adenylosuccinate synthetase from Streptococcus sanguinis (strain SK36).